Reading from the N-terminus, the 539-residue chain is 3-methylmercaptopropionyl-CoA ligase (539 aa).

Thr185 is a binding site for Mg(2+). Positions 231, 303, 324, 325, and 329 each coordinate ATP. Glu330 lines the Mg(2+) pocket. Residues Gln359, Asp417, Arg432, and Lys523 each contribute to the ATP site.

It belongs to the ATP-dependent AMP-binding enzyme family. Homodimer. The cofactor is Mg(2+).

The catalysed reaction is 3-(methylsulfanyl)propanoate + ATP + CoA = 3-(methylsulfanyl)propanoyl-CoA + AMP + diphosphate. It participates in lipid metabolism; fatty acid metabolism. With respect to regulation, activated by LiCl and NH(4)Cl. Inhibited by dimethylsulfoniopropionate (DMSP). MMPA concentrations above 2 mM relieve the DMSP inhibition and 80% of activity is regained at an MMPA concentration of 8 mM. In terms of biological role, involved in the assimilation of dimethylsulphoniopropionate (DMSP), an important compound in the fixation of carbon in marine phytoplankton. Catalyzes the ATP-dependent ligation of methylmercaptopropionate (MMPA) and CoA to yield methylmercaptopropionate-CoA (MMPA-CoA). It is also active with short-chain-fatty-acid (carboxylic acids up to six carbons in length). The sequence is that of 3-methylmercaptopropionyl-CoA ligase from Ruegeria pomeroyi (strain ATCC 700808 / DSM 15171 / DSS-3) (Silicibacter pomeroyi).